The chain runs to 330 residues: CRISPR-associated endonuclease Cas1 2 (330 aa).

Residues Glu156, His222, and Glu237 each coordinate Mn(2+).

The protein belongs to the CRISPR-associated endonuclease Cas1 family. As to quaternary structure, homodimer, forms a heterotetramer with a Cas2 homodimer. It depends on Mg(2+) as a cofactor. Mn(2+) serves as cofactor.

Its function is as follows. CRISPR (clustered regularly interspaced short palindromic repeat), is an adaptive immune system that provides protection against mobile genetic elements (viruses, transposable elements and conjugative plasmids). CRISPR clusters contain spacers, sequences complementary to antecedent mobile elements, and target invading nucleic acids. CRISPR clusters are transcribed and processed into CRISPR RNA (crRNA). Acts as a dsDNA endonuclease. Involved in the integration of spacer DNA into the CRISPR cassette. The sequence is that of CRISPR-associated endonuclease Cas1 2 from Thermodesulfovibrio yellowstonii (strain ATCC 51303 / DSM 11347 / YP87).